The primary structure comprises 240 residues: Ribonuclease PH (240 aa).

Phosphate contacts are provided by residues arginine 87 and 125–127 (GTR).

Belongs to the RNase PH family. Homohexameric ring arranged as a trimer of dimers.

It carries out the reaction tRNA(n+1) + phosphate = tRNA(n) + a ribonucleoside 5'-diphosphate. Phosphorolytic 3'-5' exoribonuclease that plays an important role in tRNA 3'-end maturation. Removes nucleotide residues following the 3'-CCA terminus of tRNAs; can also add nucleotides to the ends of RNA molecules by using nucleoside diphosphates as substrates, but this may not be physiologically important. Probably plays a role in initiation of 16S rRNA degradation (leading to ribosome degradation) during starvation. The chain is Ribonuclease PH from Pseudomonas syringae pv. syringae (strain B728a).